Consider the following 580-residue polypeptide: Phosphomethylpyrimidine synthase (580 aa).

The disordered stretch occupies residues 1–58 (MTPTQNEIHPKHSYSPIRKHGLEVPETEIALDDSPSGPNEPFRIYRTRGPETDPTLGL). Residues Asn-180, Met-209, Tyr-238, His-274, 294-296 (SRG), 335-338 (DGLR), and Glu-374 each bind substrate. Residue His-378 participates in Zn(2+) binding. A substrate-binding site is contributed by Tyr-401. Zn(2+) is bound at residue His-442. Residues Cys-522, Cys-525, and Cys-530 each contribute to the [4Fe-4S] cluster site. Positions 554–580 (VGASDSTEGMKEKSREFVAGGGEVYRE) are disordered.

Belongs to the ThiC family. Requires [4Fe-4S] cluster as cofactor.

The enzyme catalyses 5-amino-1-(5-phospho-beta-D-ribosyl)imidazole + S-adenosyl-L-methionine = 4-amino-2-methyl-5-(phosphooxymethyl)pyrimidine + CO + 5'-deoxyadenosine + formate + L-methionine + 3 H(+). It participates in cofactor biosynthesis; thiamine diphosphate biosynthesis. Its function is as follows. Catalyzes the synthesis of the hydroxymethylpyrimidine phosphate (HMP-P) moiety of thiamine from aminoimidazole ribotide (AIR) in a radical S-adenosyl-L-methionine (SAM)-dependent reaction. The polypeptide is Phosphomethylpyrimidine synthase (Corynebacterium efficiens (strain DSM 44549 / YS-314 / AJ 12310 / JCM 11189 / NBRC 100395)).